Consider the following 393-residue polypeptide: Thyrotropin-releasing hormone receptor (393 aa).

Topologically, residues 1-28 (MENDTVSEMNQTELQPQAAVALEYQVVT) are extracellular. Residues asparagine 3 and asparagine 10 are each glycosylated (N-linked (GlcNAc...) asparagine). The chain crosses the membrane as a helical span at residues 29–51 (ILLVVIICGLGIVGNIMVVLVVM). At 52 to 61 (RTKHMRTPTN) the chain is on the cytoplasmic side. The helical transmembrane segment at 62-83 (CYLVSLAVADLMVLVAAGLPNI) threads the bilayer. Over 84-99 (TDSIYGSWVYGYVGCL) the chain is Extracellular. A disulfide bridge connects residues cysteine 98 and cysteine 179. The helical transmembrane segment at 100-121 (CITYLQYLGINASSCSITAFTI) threads the bilayer. The Cytoplasmic segment spans residues 122–144 (ERYIAICHPIKAQFLCTFSRAKK). Residues 145–168 (IIIFVWAFTSIYCMLWFFLLDLNI) traverse the membrane as a helical segment. Topologically, residues 169–193 (STYKNAVVVSCGYKISRNYYSPIYL) are extracellular. The chain crosses the membrane as a helical span at residues 194 to 215 (MDFGVFYVVPMILATVLYGFIA). The Cytoplasmic portion of the chain corresponds to 216-266 (RILFLNPIPSDPKENSKMWKNDSIHQNKNLNLNATNRCFNSTVSSRKQVTK). Residues 267-288 (MLAVVVILFALLWMPYRTLVVV) traverse the membrane as a helical segment. Residues 289 to 296 (NSFLSSPF) are Extracellular-facing. Residues 297–319 (QENWFLLFCRICIYLNSAINPVI) form a helical membrane-spanning segment. Topologically, residues 320-393 (YNLMSQKFRA…FDDTCLASEN (74 aa)) are cytoplasmic.

It belongs to the G-protein coupled receptor 1 family.

The protein localises to the cell membrane. Receptor for thyrotropin-releasing hormone (TRH). Upon ligand binding, this G-protein-coupled receptor triggers activation of the phosphatidylinositol (IP3)-calcium-protein kinase C (PKC) pathway. The chain is Thyrotropin-releasing hormone receptor (Trhr) from Mus musculus (Mouse).